Reading from the N-terminus, the 367-residue chain is Cytochrome P450 119 (367 aa).

Residues His76, Arg80, Thr257, Arg259, His315, and Cys317 each coordinate heme.

Belongs to the cytochrome P450 family. Heme serves as cofactor.

The protein localises to the cytoplasm. The chain is Cytochrome P450 119 (cyp119) from Sulfurisphaera tokodaii (strain DSM 16993 / JCM 10545 / NBRC 100140 / 7) (Sulfolobus tokodaii).